Consider the following 311-residue polypeptide: Cell division protein ZipA (311 aa).

Residues 1–5 (MQELR) lie on the Periplasmic side of the membrane. Residues 6-26 (FVLIVVGALAIMALLFHGLWT) traverse the membrane as a helical segment. At 27-311 (SKKEGKAKFG…QIVEFKAANA (285 aa)) the chain is on the cytoplasmic side. A compositionally biased stretch (basic and acidic residues) spans 32–54 (KAKFGDKPLSKLDLGESEPKESE). The interval 32 to 60 (KAKFGDKPLSKLDLGESEPKESEMYVAPE) is disordered.

This sequence belongs to the ZipA family. Interacts with FtsZ via their C-terminal domains.

It localises to the cell inner membrane. Its function is as follows. Essential cell division protein that stabilizes the FtsZ protofilaments by cross-linking them and that serves as a cytoplasmic membrane anchor for the Z ring. Also required for the recruitment to the septal ring of downstream cell division proteins. This is Cell division protein ZipA from Vibrio vulnificus (strain YJ016).